Reading from the N-terminus, the 261-residue chain is Cytochrome c oxidase subunit 3 (261 aa).

The Mitochondrial matrix segment spans residues 1 to 15 (MTHQLHAYHMVKPSP). A helical transmembrane segment spans residues 16–34 (WPLTGALSAFLLTSGLIMW). The Mitochondrial intermembrane portion of the chain corresponds to 35–40 (FHFYST). The helical transmembrane segment at 41 to 66 (ALLTLGLLTNVLTMYQWWRDIIREST) threads the bilayer. The Mitochondrial matrix segment spans residues 67-72 (YQGHHT). Residues 73 to 105 (TPVQKSLRYGMTLFIISEVFFFAGFFWAFYHSS) form a helical membrane-spanning segment. The Mitochondrial intermembrane portion of the chain corresponds to 106–128 (LAPTPRLGCHWPPTGITPLNPLE). The chain crosses the membrane as a helical span at residues 129–152 (VPLLNTSVLLASGVTITWAHHSLM). The Mitochondrial matrix portion of the chain corresponds to 153–155 (NGN). Residues 156–183 (RKQTIQALLITILLGTYFTLVQISEYFE) form a helical membrane-spanning segment. Topologically, residues 184–190 (APFTISD) are mitochondrial intermembrane. A helical membrane pass occupies residues 191–223 (GIYGSTFFVATGFHGLHVIIGSTFLLICLIRQL). Over 224 to 232 (FYHFTPSHH) the chain is Mitochondrial matrix. Residues 233–256 (FGFEAAAWYWHFVDVIWLFLYISI) traverse the membrane as a helical segment. The Mitochondrial intermembrane segment spans residues 257–261 (YWWGS).

The protein belongs to the cytochrome c oxidase subunit 3 family. As to quaternary structure, component of the cytochrome c oxidase (complex IV, CIV), a multisubunit enzyme composed of 14 subunits. The complex is composed of a catalytic core of 3 subunits MT-CO1, MT-CO2 and MT-CO3, encoded in the mitochondrial DNA, and 11 supernumerary subunits COX4I, COX5A, COX5B, COX6A, COX6B, COX6C, COX7A, COX7B, COX7C, COX8 and NDUFA4, which are encoded in the nuclear genome. The complex exists as a monomer or a dimer and forms supercomplexes (SCs) in the inner mitochondrial membrane with NADH-ubiquinone oxidoreductase (complex I, CI) and ubiquinol-cytochrome c oxidoreductase (cytochrome b-c1 complex, complex III, CIII), resulting in different assemblies (supercomplex SCI(1)III(2)IV(1) and megacomplex MCI(2)III(2)IV(2)).

Its subcellular location is the mitochondrion inner membrane. It catalyses the reaction 4 Fe(II)-[cytochrome c] + O2 + 8 H(+)(in) = 4 Fe(III)-[cytochrome c] + 2 H2O + 4 H(+)(out). Its function is as follows. Component of the cytochrome c oxidase, the last enzyme in the mitochondrial electron transport chain which drives oxidative phosphorylation. The respiratory chain contains 3 multisubunit complexes succinate dehydrogenase (complex II, CII), ubiquinol-cytochrome c oxidoreductase (cytochrome b-c1 complex, complex III, CIII) and cytochrome c oxidase (complex IV, CIV), that cooperate to transfer electrons derived from NADH and succinate to molecular oxygen, creating an electrochemical gradient over the inner membrane that drives transmembrane transport and the ATP synthase. Cytochrome c oxidase is the component of the respiratory chain that catalyzes the reduction of oxygen to water. Electrons originating from reduced cytochrome c in the intermembrane space (IMS) are transferred via the dinuclear copper A center (CU(A)) of subunit 2 and heme A of subunit 1 to the active site in subunit 1, a binuclear center (BNC) formed by heme A3 and copper B (CU(B)). The BNC reduces molecular oxygen to 2 water molecules using 4 electrons from cytochrome c in the IMS and 4 protons from the mitochondrial matrix. The sequence is that of Cytochrome c oxidase subunit 3 (MT-CO3) from Papio hamadryas (Hamadryas baboon).